The following is a 301-amino-acid chain: Mitochondrial ornithine transporter 1 (301 aa).

6 helical membrane passes run 5–25 (PAIQ…ACVL), 68–88 (SPAL…YGFC), 110–130 (AAAG…TELV), 168–188 (GFYH…FFFF), 207–227 (LGPV…WLAV), and 237–257 (IQVL…LSIV). Solcar repeat units lie at residues 7–91 (IQAA…CQQV), 104–197 (LSDL…SRSF), and 207–293 (LGPV…SRKL).

Belongs to the mitochondrial carrier (TC 2.A.29) family. In terms of tissue distribution, widely expressed, with highest levels in the liver, testis and kidney. In the brain, expressed at high levels in the hypothalamus.

The protein localises to the mitochondrion inner membrane. It is found in the mitochondrion membrane. It catalyses the reaction L-citrulline(in) + L-ornithine(out) + H(+)(in) = L-citrulline(out) + L-ornithine(in) + H(+)(out). It carries out the reaction L-ornithine(in) + L-arginine(out) = L-ornithine(out) + L-arginine(in). The catalysed reaction is L-ornithine(out) + L-lysine(in) = L-ornithine(in) + L-lysine(out). The enzyme catalyses L-lysine(out) + H(+)(in) = L-lysine(in) + H(+)(out). It catalyses the reaction L-ornithine(out) + H(+)(in) = L-ornithine(in) + H(+)(out). Its activity is regulated as follows. Inhibited by pyridoxal 5'-phosphate as well as by mercurials (mersalyl, p-chloromercuribenzene sulfonate, and mercuric chloride), N-ethylmaleimide and spermine. Functionally, mitochondrial ornithine-citrulline antiporter. Catalyzes the exchange between cytosolic ornithine and mitochondrial citrulline plus an H(+), the proton compensates the positive charge of ornithine thus leading to an electroneutral transport. Plays a crucial role in the urea cycle, by connecting the cytosolic and the intramitochondrial reactions of the urea cycle. Lysine and arginine are also transported by the antiport mechanism. In addition, catalyzes an electroneutral exchange of ornithine or lysine for H(+), a reaction driven by the pH gradient across the inner membrane. The polypeptide is Mitochondrial ornithine transporter 1 (Mus musculus (Mouse)).